The following is a 413-amino-acid chain: E3 ubiquitin ligase ICP22 (413 aa).

A disordered region spans residues 1–124 (MADIPPDPPA…PPRKSKRPRI (124 aa)). Basic and acidic residues predominate over residues 62 to 76 (GDLRGGRRRSPRELG). A compositionally biased stretch (low complexity) spans 84–97 (SAESTTGTESEGTG). Tyr-189 carries the phosphotyrosine; by host modification. Disordered regions lie at residues 289-334 (LETN…SASG) and 370-390 (AERS…PERE). Residues 297-309 (SDDEISDATDSDD) show a composition bias toward acidic residues.

It belongs to the herpesviridae ICP22 family. Tyrosine phosphorylated.

Its subcellular location is the host nucleus. The protein operates within protein modification; protein ubiquitination. In terms of biological role, functions as an E3 ubiquitin ligase and plays a role in the inhibition of innate immunity by preventing IFN-mediated signaling. Induces the ubiquitination and degradation of host STAT1, STAT2 and IRF9, resulting in the blockade of ISGF3 nuclear translocation. The protein is E3 ubiquitin ligase ICP22 of Human herpesvirus 2 (strain HG52) (HHV-2).